Here is a 607-residue protein sequence, read N- to C-terminus: Hemagglutinin glycoprotein (607 aa).

At 1-37 (MLSYQDKVGAFYKDNARANSSRLSLVTEDQGGRRPPY) the chain is on the intravirion side. Residues 38–58 (LLFVLLILLVGIMALLAITGV) form a helical membrane-spanning segment. Topologically, residues 59 to 607 (RFHQVSTSNM…IRFSCNRSKP (549 aa)) are virion surface. 7 N-linked (GlcNAc...) asparagine; by host glycosylation sites follow: asparagine 149, asparagine 309, asparagine 391, asparagine 422, asparagine 456, asparagine 587, and asparagine 603.

It belongs to the paramyxoviruses hemagglutinin-neuraminidase family. Non-sialidase subfamily. Binds canine SLAMF1 at the cell surface.

It is found in the virion membrane. It localises to the host cell membrane. Attaches the virus to cell receptors and thereby initiating infection. Binding of H protein to the receptor induces a conformational change that allows the F protein to trigger virion/cell membranes fusion. The cellular receptor might be SLAM, and may explain the lymphotropism of the virus. This Canine distemper virus (strain A92-27/4) (CDV) protein is Hemagglutinin glycoprotein (H).